A 335-amino-acid chain; its full sequence is Leukocyte immunoglobulin-like receptor subfamily B member 4A (335 aa).

The signal sequence occupies residues Met1–Ala23. The Extracellular portion of the chain corresponds to Gly24–Lys238. Ig-like C2-type domains follow at residues Tyr42–Ser125 and Pro124–Asn212. Cysteines 49 and 98 form a disulfide. 2 N-linked (GlcNAc...) asparagine glycosylation sites follow: Asn133 and Asn191. An intrachain disulfide couples Cys144 to Cys196. A helical transmembrane segment spans residues Ile239–Ile260. The Cytoplasmic portion of the chain corresponds to Gly261–Ser335. 2 short sequence motifs (ITIM motif) span residues Ile298–Val303 and Val320–Leu325.

Interacts (when tyrosine phosphorylated) with SH2 domain-containing phosphatases PTPN6/SHP-1 and PTPN11/SHP-2; interaction with PTPN6 enhances inhibition of mast cell activation. Tyrosine phosphorylated. As to expression, expressed on mast cells and natural killer cells (at protein level). Expressed on neutrophils (at protein level). Expressed on eosinophils (at protein level). Expressed on dendritic cells (at protein level). Expressed on memory and marginal zone B cells (at protein level). Expressed on CD8 T cells (at protein level). Expressed in the uterus of pregnant mice where it is detected at day 4.0 of pregnancy with levels dropping at day 4.5. Highly expressed in the luminal epithelium of uterine endometrium with lower levels in the glandular epithelium.

The protein localises to the cell membrane. Inhibitory receptor involved in the down-regulation of the immune response. Receptor for FN1. Receptor for integrin ITGAV/ITGB3. Inhibits IgE-mediated mast cell activation, at least in part through interaction with ITGAV/ITGB3. Also inhibits KITLG/SCF-mediated mast cell activation. Through interaction with ITGAV/ITGB3, inhibits antibody production by memory and marginal zone B cells, probably by suppressing their differentiation into plasma cells. Inhibits IFNG production by CD8 T cells, CD4 T cells and natural killer cells. Inhibits antigen presentation by dendritic cells to T cells, preventing T cell activation. Inhibits lipopolysaccharide-mediated neutrophil-dependent vascular injury. Suppresses the allergic inflammatory response by inhibiting infiltration of neutrophils and eosinophils and preventing mast cell degranulation. Inhibits lysis by natural killer cells. In Mus musculus (Mouse), this protein is Leukocyte immunoglobulin-like receptor subfamily B member 4A.